The sequence spans 121 residues: MDEIKEYLAKILENKIKISMIAKFKSVEEYEGRIFKDLFDVEMKNLEILYEKYLIYFNEKPNIKAEVDTNADVIEILKETIELEKFLAKKLGVNFGVRQAVIHALSDDERFLYFLTKKPYF.

This is an uncharacterized protein from Methanocaldococcus jannaschii (strain ATCC 43067 / DSM 2661 / JAL-1 / JCM 10045 / NBRC 100440) (Methanococcus jannaschii).